The sequence spans 170 residues: VIP peptides (170 aa).

The N-terminal stretch at 1–20 (MDTRNKAQLLVLLTLLSVLF) is a signal peptide. Positions 21 to 79 (SQTSAWPLYRAPSALRLGDRIPFEGANEPDQVSLKEDIDMLQNALAENDTPYYDVSRNA) are excised as a propeptide. Ser76 carries the post-translational modification Phosphoserine. Met107 bears the Methionine amide mark. Asn152 carries the asparagine amide modification. The propeptide occupies 156 to 170 (SSEGESPDFPEELEK).

Belongs to the glucagon family.

It localises to the secreted. VIP is a neuropeptide involved in a diverse array of physiological processes through activating the PACAP subfamily of class B1 G protein-coupled receptors: VIP receptor 1 (VPR1) and VIP receptor 2 (VPR2). Abundantly expressed throughout the CNS and peripheral nervous systems where they primarily exert neuroprotective and immune modulatory roles. Also causes vasodilation, lowers arterial blood pressure, stimulates myocardial contractility, increases glycogenolysis and relaxes the smooth muscle of trachea, stomach and gall bladder. Its function is as follows. PHM-27 and PHV-42 are two bioactive forms from proteolysis of the same precursor protein, that cause vasodilation. PHM-27 is a potent agonist of the calcitonin receptor CALCR, with similar efficacy as calcitonin. In Homo sapiens (Human), this protein is VIP peptides.